The chain runs to 725 residues: MKNLVLQNLKSNKAYSFLEIARINKINPNFNSQLSKALFSLLDQGLIVKNNDGNFIKVNEIKKIQGIFKQSNRNFAFIETADEQSYFVAKAHFNGAINSFEVEAIVYESPFEKDKKYAVVKKILKNTHPEIIGFIKISNGIKYFNAFEESFRSYKFFVDQNIDVEEDDVILVVVEKIVDQKIYVNFVKKVSTLKSNFYQIDIVLEKSKTIIDFPEDVLDESALIEDHVIEKDYQNRKDLRDKLIITIDGEDTKDFDDAIYVEKNKDHFLLSVHIADVAHYVKENSAIDKEALRRATSIYLPHMVIPMLPEKLSNGICSLNPGVDRLVMSIDIFIDFQGNTIKTELYEGIINSKHRLTYNQVNDFYNNKIKLDPNLEKMLNDSLELSKILENYKKDEGYINLEIEESKVILDKEGKTVGIKVIQRGLSEVLIENFMVRANEAVAWKMNKLKLPSIYRVHDNPSIESLVLFEKTLKTLGIDFDTPKITSPKAFSDSFEKIKQNYQIDNFVKLMVLRTMEKAIYSDKNIGHFGLASSYYSHFTSPIRRYPDLQLHRLIKQMVFDKSNLKEKKNHFSLILSDVSVQSSKKEVEAVSIERQINDIKKAEYYESKIGKSLKAQIVSILSFGMFVEFEDKVSGLIHISNLLGEDFQVSEDGLLISSNKTKYKLGQEIDVVVVKVDKNLGKVDVVLEKDYQEYLKKEQAFQAFKKNKFTQDKEKQNGKINYKK.

The 324-residue stretch at 236-559 (RKDLRDKLII…QLHRLIKQMV (324 aa)) folds into the RNB domain. In terms of domain architecture, S1 motif spans 611-689 (GKSLKAQIVS…NLGKVDVVLE (79 aa)).

It belongs to the RNR ribonuclease family. RNase R subfamily.

It is found in the cytoplasm. The catalysed reaction is Exonucleolytic cleavage in the 3'- to 5'-direction to yield nucleoside 5'-phosphates.. 3'-5' exoribonuclease that releases 5'-nucleoside monophosphates and is involved in maturation of structured RNAs. This Mycoplasmopsis pulmonis (strain UAB CTIP) (Mycoplasma pulmonis) protein is Ribonuclease R.